The chain runs to 354 residues: Probable protein phosphatase 2C 69 (354 aa).

The 247-residue stretch at 33-279 (SYGYASSAGK…DNITCVVVRF (247 aa)) folds into the PPM-type phosphatase domain. D69, G70, D231, and D270 together coordinate Mn(2+). The disordered stretch occupies residues 289–354 (HISSSSSKEA…LERNSVTDKV (66 aa)). 2 stretches are compositionally biased toward polar residues: residues 309–328 (ISSNEAKQVQIGSGNKPENV) and 336–348 (ASRSTDTLTLERN).

This sequence belongs to the PP2C family. The cofactor is Mg(2+). Requires Mn(2+) as cofactor.

It catalyses the reaction O-phospho-L-seryl-[protein] + H2O = L-seryl-[protein] + phosphate. The enzyme catalyses O-phospho-L-threonyl-[protein] + H2O = L-threonyl-[protein] + phosphate. In Arabidopsis thaliana (Mouse-ear cress), this protein is Probable protein phosphatase 2C 69.